Here is a 771-residue protein sequence, read N- to C-terminus: ATP-dependent DNA helicase UvrD1 (771 aa).

The segment at 1 to 21 is disordered; it reads MSVHATDAKPPGPSPADQLLD. The UvrD-like helicase ATP-binding domain maps to 21 to 311; it reads DGLNPQQRQA…ILLEQNYRST (291 aa). ATP-binding positions include 45-50 and Arg-309; that span reads GSGKTA. Positions 312–603 constitute a UvrD-like helicase C-terminal domain; it reads QNILSAANSV…TLMTLHTAKG (292 aa). The interval 691–716 is disordered; sequence FSAPVSGAGRFGSARPSPTRSGASRR.

It belongs to the helicase family. UvrD subfamily. In terms of assembly, monomer. The cofactor is Mg(2+).

It catalyses the reaction Couples ATP hydrolysis with the unwinding of duplex DNA by translocating in the 3'-5' direction.. It carries out the reaction ATP + H2O = ADP + phosphate + H(+). In terms of biological role, DNA-dependent ATPase, acting on dsDNA with a 3'-ssDNA tail, unwinding with 3'-to 5'-polarity. Also highly efficient on nicked DNA. Involved in the post-incision events of nucleotide excision repair. The protein is ATP-dependent DNA helicase UvrD1 (uvrD1) of Mycobacterium bovis (strain ATCC BAA-935 / AF2122/97).